The sequence spans 308 residues: Ectoine dioxygenase (308 aa).

L-ectoine is bound at residue Gln131. Position 137 (Lys137) interacts with 2-oxoglutarate. Fe cation is bound by residues His148, Asp150, and His249.

This sequence belongs to the PhyH family. EctD subfamily. In terms of assembly, homodimer. It depends on Fe(2+) as a cofactor.

The catalysed reaction is L-ectoine + 2-oxoglutarate + O2 = 5-hydroxyectoine + succinate + CO2. Involved in the biosynthesis of 5-hydroxyectoine, called compatible solute, which helps organisms to survive extreme osmotic stress by acting as a highly soluble organic osmolyte. Catalyzes the 2-oxoglutarate-dependent selective hydroxylation of L-ectoine to yield (4S,5S)-5-hydroxyectoine. This chain is Ectoine dioxygenase, found in Bordetella parapertussis (strain 12822 / ATCC BAA-587 / NCTC 13253).